The primary structure comprises 473 residues: MIDIKAQYDIPTMRRIQNIHFIGIGGVGMCGIAEVLHNQGYQVSGSDLKASSTTDRLEELGIKIYLGHLEENVYNAHVIVVSTAINEQNPEIIWGKEHRIPIVRRAEMLAELMRYRHGIAVAGTHGKTTTTSLMASILAATGEAPTFVIGGRLTSAGANAQLGSSAYLVAEADESDASFLHLQPQTVIVTNIDEDHMDTYDGDFEKVKHTFIEFVHNLPFYGLAVLCVDDENVREILPTLSRPVLTYGIDQEADFYATEIVQTGRYCEFLAHRPEGEPLKIRLPMPGRHNVLNALATIAVATDLGVDASAIQAGLMGFEGVGRRFQEQKPLALPNGSNVMFVDDYGHHPSEVLATIKAIRAGWPEKRLVMVYQPHRYTRTRDLYEDFVRVLSQVDVLLLLDVYSAGEAPINGADSRSLCGSIRQRGNVDPIHVGSEADLRSILSNVLREGDLLITQGAGDIGMVSKNLSVSGI.

Residue G123 to T129 participates in ATP binding.

It belongs to the MurCDEF family.

It localises to the cytoplasm. The catalysed reaction is UDP-N-acetyl-alpha-D-muramate + L-alanine + ATP = UDP-N-acetyl-alpha-D-muramoyl-L-alanine + ADP + phosphate + H(+). It functions in the pathway cell wall biogenesis; peptidoglycan biosynthesis. Functionally, cell wall formation. This chain is UDP-N-acetylmuramate--L-alanine ligase, found in Marinomonas sp. (strain MWYL1).